A 176-amino-acid chain; its full sequence is ATP synthase subunit d, mitochondrial (176 aa).

F-type ATP synthases have 2 components, the catalytic core F(1) and the membrane-embedded component F(0), linked together by a central stalk and a peripheral stalk. The central stalk, also called rotor shaft, is often seen as part of F(1). The peripheral stalk is seen as part of F(0). F(0) contains the membrane channel next to the rotor. F-type ATP synthases form dimers but each monomer functions independently in ATP generation. The dimer consists of 17 different polypeptides: ATP1 (subunit alpha, 3 molecules per monomer, part of F(1)), ATP2 (subunit beta, 3 copies per monomer, part of F(1)), ATP3 (subunit gamma, part of the central stalk), ATP4 (subunit b, part of the peripheral stalk), ATP5/OSCP (subunit 5/OSCP, part of the peripheral stalk), ATP6 (subunit a, part of the peripheral stalk), ATP7 (subunit d, part of the peripheral stalk), ATP8 (subunit 8, part of the peripheral stalk), OLI1 (subunit c, part of the rotor, 10 molecules per monomer), ATP14 (subunit h, part of the peripheral stalk), ATP15 (subunit epsilon, part of the central stalk), ATP16 (subunit delta, part of the central stalk), ATP17 (subunit f, part of the peripheral stalk), ATP18 (subunit i/j, part of the peripheral stalk), ATP19 (subunit k, dimer-specific, at interface between monomers), ATP20 (subunit g, at interface between monomers), TIM11 (subunit e, at interface between monomers).

The protein localises to the mitochondrion inner membrane. In terms of biological role, mitochondrial membrane ATP synthase (F(1)F(0) ATP synthase or Complex V) produces ATP from ADP in the presence of a proton gradient across the membrane which is generated by electron transport complexes of the respiratory chain. F-type ATP synthases consist of two structural domains, F(1) - containing the extramembraneous catalytic core, and F(0) - containing the membrane proton channel, linked together by a central stalk and a peripheral stalk. During catalysis, ATP synthesis in the catalytic domain of F(1) is coupled via a rotary mechanism of the central stalk subunits to proton translocation. Part of the complex F(0) domain and the peripheral stalk, which acts as a stator to hold the catalytic alpha/ATP1(3)beta/ATP2(3) subcomplex and subunit a/ATP6 static relative to the rotary elements. This chain is ATP synthase subunit d, mitochondrial, found in Yarrowia lipolytica (strain CLIB 122 / E 150) (Yeast).